The primary structure comprises 218 residues: Fucoxanthin-chlorophyll a-c binding protein, chloroplastic (218 aa).

The transit peptide at 1 to 36 (MFYSAAVAALMVGSASAFLAPAQFNSVAKSSGALSM) directs the protein to the chloroplast.

The protein belongs to the fucoxanthin chlorophyll protein family. As to quaternary structure, the LHC complex of chromophytic algae is composed of fucoxanthin, chlorophyll A and C bound non-covalently by fucoxanthin chlorophyll proteins (FCPs). The ratio of pigments in this LHC is; fucoxanthin: chlorophyll C: chlorophyll A; (0.6-1): (0.1-0.3): (1).

It localises to the plastid. Its subcellular location is the chloroplast thylakoid membrane. Its function is as follows. The light-harvesting complex (LHC) functions as a light receptor, it captures and delivers excitation energy to photosystems with which it is closely associated. Energy is transferred from the carotenoid and chlorophyll C (or B) to chlorophyll A and the photosynthetic reaction centers where it is used to synthesize ATP and reducing power. This is Fucoxanthin-chlorophyll a-c binding protein, chloroplastic from Chattonella marina var. antiqua (Red tide flagellate).